Consider the following 253-residue polypeptide: Proteasome subunit alpha type-7 (253 aa).

Belongs to the peptidase T1A family. As to quaternary structure, the 26S proteasome consists of a 20S proteasome core and two 19S regulatory subunits. The 20S proteasome core is composed of 28 subunits that are arranged in four stacked rings, resulting in a barrel-shaped structure. The two end rings are each formed by seven alpha subunits, and the two central rings are each formed by seven beta subunits. The catalytic chamber with the active sites is on the inside of the barrel.

The protein resides in the cytoplasm. Its subcellular location is the nucleus. In terms of biological role, the proteasome is a multicatalytic proteinase complex which is characterized by its ability to cleave peptides with Arg, Phe, Tyr, Leu, and Glu adjacent to the leaving group at neutral or slightly basic pH. The proteasome has an ATP-dependent proteolytic activity. In Caenorhabditis elegans, this protein is Proteasome subunit alpha type-7 (pas-4).